Consider the following 107-residue polypeptide: Iron-binding protein IscA (107 aa).

Fe cation-binding residues include Cys-35, Cys-99, and Cys-101.

The protein belongs to the HesB/IscA family. As to quaternary structure, homodimer; may form tetramers and higher multimers. It depends on Fe cation as a cofactor.

Its function is as follows. Is able to transfer iron-sulfur clusters to apo-ferredoxin. Multiple cycles of [2Fe2S] cluster formation and transfer are observed, suggesting that IscA acts catalytically. Recruits intracellular free iron so as to provide iron for the assembly of transient iron-sulfur cluster in IscU in the presence of IscS, L-cysteine and the thioredoxin reductase system TrxA/TrxB. The chain is Iron-binding protein IscA from Salmonella agona (strain SL483).